A 338-amino-acid chain; its full sequence is RNA 3'-terminal phosphate cyclase (338 aa).

ATP-binding positions include glutamine 103 and 283-287 (YLADQ). Residue histidine 308 is the Tele-AMP-histidine intermediate of the active site.

The protein belongs to the RNA 3'-terminal cyclase family. Type 1 subfamily.

Its subcellular location is the cytoplasm. It catalyses the reaction a 3'-end 3'-phospho-ribonucleotide-RNA + ATP = a 3'-end 2',3'-cyclophospho-ribonucleotide-RNA + AMP + diphosphate. Catalyzes the conversion of 3'-phosphate to a 2',3'-cyclic phosphodiester at the end of RNA. The mechanism of action of the enzyme occurs in 3 steps: (A) adenylation of the enzyme by ATP; (B) transfer of adenylate to an RNA-N3'P to produce RNA-N3'PP5'A; (C) and attack of the adjacent 2'-hydroxyl on the 3'-phosphorus in the diester linkage to produce the cyclic end product. The biological role of this enzyme is unknown but it is likely to function in some aspects of cellular RNA processing. This is RNA 3'-terminal phosphate cyclase from Escherichia coli O127:H6 (strain E2348/69 / EPEC).